Consider the following 552-residue polypeptide: MEKVKQTIRAPRGTELQTKGWVQEAALRMLMNNLDPEVAEKPEELVVYGGIGRAARNWESYQAIVDSLKTLESDETLLVQSGKPVAIFKSHEDAPRVLLANSNLVPKWANWDHFRELEKKGLMMYGQMTAGSWIYIGTQGILQGTYETFGEAARQHFGGSLKGTLTLTAGLGGMGGAQPLAVTMNGGVVIAIDVDKRSIDRRIEKRYCDMYTESLEEALAVANEYKEKKEPISIGLLGNAAEILPELVKRNITPDLVTDQTSAHDPLNGYIPVGYTLEEAAKLREEDPERYVQLSKESMTKHVEAMLAMQEKGAITFDYGNNIRQVAFDEGLKNAFDFPGFVPAFIRPLFCEGKGPFRWVALSGDPEDIYKTDEVILREFADNEHLCNWIRMARQQVEFQGLPSRICWLGYGERAKFGRIINEMVANGELSAPIVIGRDHLDCGSVASPNRETEAMKDGSDAVADWPILNALINSVNGASWVSVHHGGGVGMGYSLHAGMVIVADGTEAAAKRIERVLTSDPGMGVVRHVDAGYDLAVETAKEKGVNIPMMK.

NAD(+)-binding positions include 49–50 (GG), Q127, 173–175 (GMG), D193, 239–240 (NA), 260–264 (QTSAH), 270–271 (YI), and Y319. Residue C407 is part of the active site. Residue G489 participates in NAD(+) binding.

This sequence belongs to the urocanase family. NAD(+) serves as cofactor.

It localises to the cytoplasm. The catalysed reaction is 4-imidazolone-5-propanoate = trans-urocanate + H2O. It functions in the pathway amino-acid degradation; L-histidine degradation into L-glutamate; N-formimidoyl-L-glutamate from L-histidine: step 2/3. Its function is as follows. Catalyzes the conversion of urocanate to 4-imidazolone-5-propionate. This is Urocanate hydratase from Bacillus cereus (strain AH820).